Here is a 214-residue protein sequence, read N- to C-terminus: Pyridoxine/pyridoxamine 5'-phosphate oxidase (214 aa).

Residues 8-11 (RINY) and Lys-66 contribute to the substrate site. FMN contacts are provided by residues 61–66 (RIVLIK), 76–77 (FT), Arg-82, Lys-83, and Gln-105. Substrate is bound by residues Tyr-123, Arg-127, and Ser-131. FMN contacts are provided by residues 140 to 141 (QS) and Trp-184. 190–192 (RLH) serves as a coordination point for substrate. Arg-194 is an FMN binding site.

This sequence belongs to the pyridoxamine 5'-phosphate oxidase family. In terms of assembly, homodimer. Requires FMN as cofactor.

The enzyme catalyses pyridoxamine 5'-phosphate + O2 + H2O = pyridoxal 5'-phosphate + H2O2 + NH4(+). It catalyses the reaction pyridoxine 5'-phosphate + O2 = pyridoxal 5'-phosphate + H2O2. It participates in cofactor metabolism; pyridoxal 5'-phosphate salvage; pyridoxal 5'-phosphate from pyridoxamine 5'-phosphate: step 1/1. The protein operates within cofactor metabolism; pyridoxal 5'-phosphate salvage; pyridoxal 5'-phosphate from pyridoxine 5'-phosphate: step 1/1. Catalyzes the oxidation of either pyridoxine 5'-phosphate (PNP) or pyridoxamine 5'-phosphate (PMP) into pyridoxal 5'-phosphate (PLP). This chain is Pyridoxine/pyridoxamine 5'-phosphate oxidase, found in Burkholderia cenocepacia (strain HI2424).